We begin with the raw amino-acid sequence, 486 residues long: tRNA sulfurtransferase (486 aa).

The 105-residue stretch at 63-167 (DAFAERLGCI…HEKLYMVVRR (105 aa)) folds into the THUMP domain. Residues 185 to 186 (LI), Lys-267, Gly-289, and Gln-298 contribute to the ATP site. The cysteines at positions 346 and 460 are disulfide-linked. Residues 408-486 (VDTQEVVIDI…GYTNVKVYRP (79 aa)) form the Rhodanese domain. Catalysis depends on Cys-460, which acts as the Cysteine persulfide intermediate.

This sequence belongs to the ThiI family.

The protein localises to the cytoplasm. It catalyses the reaction [ThiI sulfur-carrier protein]-S-sulfanyl-L-cysteine + a uridine in tRNA + 2 reduced [2Fe-2S]-[ferredoxin] + ATP + H(+) = [ThiI sulfur-carrier protein]-L-cysteine + a 4-thiouridine in tRNA + 2 oxidized [2Fe-2S]-[ferredoxin] + AMP + diphosphate. It carries out the reaction [ThiS sulfur-carrier protein]-C-terminal Gly-Gly-AMP + S-sulfanyl-L-cysteinyl-[cysteine desulfurase] + AH2 = [ThiS sulfur-carrier protein]-C-terminal-Gly-aminoethanethioate + L-cysteinyl-[cysteine desulfurase] + A + AMP + 2 H(+). It participates in cofactor biosynthesis; thiamine diphosphate biosynthesis. Functionally, catalyzes the ATP-dependent transfer of a sulfur to tRNA to produce 4-thiouridine in position 8 of tRNAs, which functions as a near-UV photosensor. Also catalyzes the transfer of sulfur to the sulfur carrier protein ThiS, forming ThiS-thiocarboxylate. This is a step in the synthesis of thiazole, in the thiamine biosynthesis pathway. The sulfur is donated as persulfide by IscS. The sequence is that of tRNA sulfurtransferase from Shewanella denitrificans (strain OS217 / ATCC BAA-1090 / DSM 15013).